Reading from the N-terminus, the 341-residue chain is Holliday junction branch migration complex subunit RuvB (341 aa).

Positions 1–180 (MAKSHTLNPE…FGIQLRLDYY (180 aa)) are large ATPase domain (RuvB-L). ATP is bound by residues Leu19, Arg20, Gly61, Lys64, Thr65, Thr66, Arg170, Tyr180, and Arg217. Thr65 contributes to the Mg(2+) binding site. The interval 181–251 (NDEEMKEIVL…LCLKAFEKMG (71 aa)) is small ATPAse domain (RuvB-S). A head domain (RuvB-H) region spans residues 254 to 341 (DLGLDGMDRQ…ENHGQDPTLF (88 aa)). DNA-binding residues include Arg309 and Arg314.

The protein belongs to the RuvB family. As to quaternary structure, homohexamer. Forms an RuvA(8)-RuvB(12)-Holliday junction (HJ) complex. HJ DNA is sandwiched between 2 RuvA tetramers; dsDNA enters through RuvA and exits via RuvB. An RuvB hexamer assembles on each DNA strand where it exits the tetramer. Each RuvB hexamer is contacted by two RuvA subunits (via domain III) on 2 adjacent RuvB subunits; this complex drives branch migration. In the full resolvosome a probable DNA-RuvA(4)-RuvB(12)-RuvC(2) complex forms which resolves the HJ.

It is found in the cytoplasm. It carries out the reaction ATP + H2O = ADP + phosphate + H(+). In terms of biological role, the RuvA-RuvB-RuvC complex processes Holliday junction (HJ) DNA during genetic recombination and DNA repair, while the RuvA-RuvB complex plays an important role in the rescue of blocked DNA replication forks via replication fork reversal (RFR). RuvA specifically binds to HJ cruciform DNA, conferring on it an open structure. The RuvB hexamer acts as an ATP-dependent pump, pulling dsDNA into and through the RuvAB complex. RuvB forms 2 homohexamers on either side of HJ DNA bound by 1 or 2 RuvA tetramers; 4 subunits per hexamer contact DNA at a time. Coordinated motions by a converter formed by DNA-disengaged RuvB subunits stimulates ATP hydrolysis and nucleotide exchange. Immobilization of the converter enables RuvB to convert the ATP-contained energy into a lever motion, pulling 2 nucleotides of DNA out of the RuvA tetramer per ATP hydrolyzed, thus driving DNA branch migration. The RuvB motors rotate together with the DNA substrate, which together with the progressing nucleotide cycle form the mechanistic basis for DNA recombination by continuous HJ branch migration. Branch migration allows RuvC to scan DNA until it finds its consensus sequence, where it cleaves and resolves cruciform DNA. This is Holliday junction branch migration complex subunit RuvB from Leptospira borgpetersenii serovar Hardjo-bovis (strain JB197).